A 258-amino-acid chain; its full sequence is Imidazole glycerol phosphate synthase subunit HisF (258 aa).

Residues D11 and D130 contribute to the active site.

This sequence belongs to the HisA/HisF family. Heterodimer of HisH and HisF.

It is found in the cytoplasm. The catalysed reaction is 5-[(5-phospho-1-deoxy-D-ribulos-1-ylimino)methylamino]-1-(5-phospho-beta-D-ribosyl)imidazole-4-carboxamide + L-glutamine = D-erythro-1-(imidazol-4-yl)glycerol 3-phosphate + 5-amino-1-(5-phospho-beta-D-ribosyl)imidazole-4-carboxamide + L-glutamate + H(+). It participates in amino-acid biosynthesis; L-histidine biosynthesis; L-histidine from 5-phospho-alpha-D-ribose 1-diphosphate: step 5/9. IGPS catalyzes the conversion of PRFAR and glutamine to IGP, AICAR and glutamate. The HisF subunit catalyzes the cyclization activity that produces IGP and AICAR from PRFAR using the ammonia provided by the HisH subunit. This chain is Imidazole glycerol phosphate synthase subunit HisF, found in Escherichia coli O127:H6 (strain E2348/69 / EPEC).